A 265-amino-acid polypeptide reads, in one-letter code: Phosphatidylglycerol--prolipoprotein diacylglyceryl transferase (265 aa).

4 helical membrane-spanning segments follow: residues 10 to 30 (VAIA…LIGI), 56 to 76 (LVFW…VLFY), 87 to 107 (LILQ…GVLL), and 117 to 137 (GKGF…GLGA). Residue arginine 139 coordinates a 1,2-diacyl-sn-glycero-3-phospho-(1'-sn-glycerol). 3 helical membrane-spanning segments follow: residues 172 to 192 (PSQL…LWFY), 200 to 220 (MAVS…VEFV), and 227 to 247 (LGYL…PMIL).

Belongs to the Lgt family.

Its subcellular location is the cell inner membrane. The enzyme catalyses L-cysteinyl-[prolipoprotein] + a 1,2-diacyl-sn-glycero-3-phospho-(1'-sn-glycerol) = an S-1,2-diacyl-sn-glyceryl-L-cysteinyl-[prolipoprotein] + sn-glycerol 1-phosphate + H(+). The protein operates within protein modification; lipoprotein biosynthesis (diacylglyceryl transfer). Functionally, catalyzes the transfer of the diacylglyceryl group from phosphatidylglycerol to the sulfhydryl group of the N-terminal cysteine of a prolipoprotein, the first step in the formation of mature lipoproteins. The protein is Phosphatidylglycerol--prolipoprotein diacylglyceryl transferase of Azotobacter vinelandii (strain DJ / ATCC BAA-1303).